The chain runs to 290 residues: Glycine-N-acyltransferase-like protein 3 (290 aa).

The catalysed reaction is an acyl-CoA + glycine = an N-acylglycine + CoA + H(+). The enzyme catalyses (9Z)-octadecenoyl-CoA + glycine = N-(9Z-octadecenoyl)glycine + CoA + H(+). It carries out the reaction hexadecanoyl-CoA + glycine = N-hexadecanoylglycine + CoA + H(+). Its pathway is lipid metabolism. Catalyzes the conjugation of long-chain fatty acyl-CoA thioester and glycine to produce long-chain N-(fatty acyl)glycine, an intermediate in the primary fatty acid amide biosynthetic pathway. The polypeptide is Glycine-N-acyltransferase-like protein 3 (Mus musculus (Mouse)).